We begin with the raw amino-acid sequence, 333 residues long: Polygalacturonase inhibitor (333 aa).

An N-terminal signal peptide occupies residues 1-27 (METSKLFLLSSSLLLVLLATRPCPSLS). 2 cysteine pairs are disulfide-bonded: cysteine 30-cysteine 60 and cysteine 61-cysteine 68. LRR repeat units follow at residues 72–96 (THRI…VGDL), 97–120 (PFLE…AIAK), 121–144 (LKHL…FFSE), 145–169 (LKNL…LSLL), 170–192 (PNLG…SFGK), 194–220 (AGST…GFDP), 221–240 (NVMD…FFNA), 241–263 (NKST…RVEF), 264–288 (PKSL…MTSL), and 290–312 (LQFL…KLQS). N-linked (GlcNAc...) asparagine glycans are attached at residues asparagine 109, asparagine 133, asparagine 147, and asparagine 157. Asparagine 241 is a glycosylation site (N-linked (GlcNAc...) asparagine). An N-linked (GlcNAc...) asparagine glycan is attached at asparagine 294. Cystine bridges form between cysteine 301–cysteine 323 and cysteine 325–cysteine 332.

Belongs to the polygalacturonase-inhibiting protein family.

Its subcellular location is the secreted. The protein localises to the cell wall. It localises to the membrane. Inhibitor of fungal polygalacturonase. It is an important factor for plant resistance to phytopathogenic fungi. The sequence is that of Polygalacturonase inhibitor (pgip) from Vitis vinifera (Grape).